The primary structure comprises 139 residues: D-ribose pyranase (139 aa).

His20 (proton donor) is an active-site residue. Substrate-binding positions include Asp28, His106, and 128–130; that span reads YAN.

Belongs to the RbsD / FucU family. RbsD subfamily. Homodecamer.

The protein resides in the cytoplasm. The enzyme catalyses beta-D-ribopyranose = beta-D-ribofuranose. It functions in the pathway carbohydrate metabolism; D-ribose degradation; D-ribose 5-phosphate from beta-D-ribopyranose: step 1/2. Functionally, catalyzes the interconversion of beta-pyran and beta-furan forms of D-ribose. The protein is D-ribose pyranase of Enterobacter sp. (strain 638).